We begin with the raw amino-acid sequence, 336 residues long: Glyceraldehyde-3-phosphate dehydrogenase (336 aa).

Residues 12–13 (RI), Asp34, Arg78, and Thr121 each bind NAD(+). D-glyceraldehyde 3-phosphate-binding positions include 151–153 (SCT), Thr182, Arg199, 212–213 (TG), and Arg235. Residue Cys152 is the Nucleophile of the active site. Asn316 lines the NAD(+) pocket.

It belongs to the glyceraldehyde-3-phosphate dehydrogenase family. In terms of assembly, homotetramer.

The protein localises to the cytoplasm. It carries out the reaction D-glyceraldehyde 3-phosphate + phosphate + NAD(+) = (2R)-3-phospho-glyceroyl phosphate + NADH + H(+). It functions in the pathway carbohydrate degradation; glycolysis; pyruvate from D-glyceraldehyde 3-phosphate: step 1/5. In terms of biological role, catalyzes the oxidative phosphorylation of glyceraldehyde 3-phosphate (G3P) to 1,3-bisphosphoglycerate (BPG) using the cofactor NAD. The first reaction step involves the formation of a hemiacetal intermediate between G3P and a cysteine residue, and this hemiacetal intermediate is then oxidized to a thioester, with concomitant reduction of NAD to NADH. The reduced NADH is then exchanged with the second NAD, and the thioester is attacked by a nucleophilic inorganic phosphate to produce BPG. This Streptococcus pyogenes serotype M3 (strain ATCC BAA-595 / MGAS315) protein is Glyceraldehyde-3-phosphate dehydrogenase (gap).